Consider the following 476-residue polypeptide: Aspartyl/glutamyl-tRNA(Asn/Gln) amidotransferase subunit B (476 aa).

This sequence belongs to the GatB/GatE family. GatB subfamily. Heterotrimer of A, B and C subunits.

The catalysed reaction is L-glutamyl-tRNA(Gln) + L-glutamine + ATP + H2O = L-glutaminyl-tRNA(Gln) + L-glutamate + ADP + phosphate + H(+). It catalyses the reaction L-aspartyl-tRNA(Asn) + L-glutamine + ATP + H2O = L-asparaginyl-tRNA(Asn) + L-glutamate + ADP + phosphate + 2 H(+). In terms of biological role, allows the formation of correctly charged Asn-tRNA(Asn) or Gln-tRNA(Gln) through the transamidation of misacylated Asp-tRNA(Asn) or Glu-tRNA(Gln) in organisms which lack either or both of asparaginyl-tRNA or glutaminyl-tRNA synthetases. The reaction takes place in the presence of glutamine and ATP through an activated phospho-Asp-tRNA(Asn) or phospho-Glu-tRNA(Gln). This is Aspartyl/glutamyl-tRNA(Asn/Gln) amidotransferase subunit B from Neisseria meningitidis serogroup B (strain ATCC BAA-335 / MC58).